We begin with the raw amino-acid sequence, 657 residues long: Protein FAM200B (657 aa).

The protein belongs to the FAM200 family.

In Homo sapiens (Human), this protein is Protein FAM200B.